We begin with the raw amino-acid sequence, 883 residues long: MGEGALAPGLQLLLRACEQGDTDTARRLLEPGADPVAGPEAGAEPAGPEAVRAAEAGAPVPVDCSDEAGNSALQLAAAGGHEPLVRFLLRRGASVNSRNHYGWSALMQAARCGHVSVAHLLLDHGADVNAQNRLGASVLTVASRGGHLGVVKLLLEAGAIVDHHTPSGESPATGGSGDELLGITALMAAVQHGHEAVVRLLMEWGADPNHTARTVGWSPLMLAALLGKLNVAQQLVEKGANPDHLSVLEKTAFEVALDRKYRDLAEYLDPLTTVRPKTDEEKRRPDIFYALKMGNFQLVKEIADEDPNHVNLVNGDGATPLMLAAVTGHLPLVQLLVEKHADMDKQDSVHGWTALMQATYHGNKEIVKYLLNQGADVALRAKNGYTAFDLVMLLNDPDTELVRLLASVCMQVNKDRGRPSHRPPLPHSKARQPWSIPVLPDDKGGLKSWWSRMSNRFRKLKLMQTLPRGLAANQPLPFSDEPELALDSTMRAPPQDRTSHLGPPEAAHATKDSGPGNPRREKGDVLLTTMLRNGAPFPRLPSDKLKAVIPPFLPPSSFELWSSDRSHTCHNGKADPTKTALPPRASRAHPVGCVGTDGATSRPVKFPSISRSPASPASSGSFNHSPHSSGGASGIGGMSRLGGELHSRSGGSVDSVLSQIAAQRKKAAGLCEQKPRQQSSPVGPATSSSPPELPASLPSSGSGSSSGPSSSKKLDPSKRPPSGTSATSKSTSPTLTPSPSPKGHTAESSVSSSSSHRQSKSSGGSSSGTITDEDELTGILKKLSLEKYQPIFEEQEVDMEAFLTLTDGDLQELGIKTDGSRQQILAAISELNAGKGRERQILQETIHNFHSSFESSASNTRAPGNGPSMAGWTRPEETVSSRR.

ANK repeat units lie at residues 8–37 (PGLQ…DPVA), 68–97 (AGNS…SVNS), 101–130 (YGWS…DVNA), 134–163 (LGAS…IVDH), 181–210 (LGIT…DPNH), 215–244 (VGWS…NPDH), 282–312 (KRRP…HVNL), 316–345 (DGAT…DMDK), 350–379 (HGWT…DVAL), and 383–414 (NGYT…QVNK). Residues 30–50 (EPGADPVAGPEAGAEPAGPEA) are disordered. Disordered stretches follow at residues 414–439 (KDRG…IPVL), 490–522 (MRAP…RREK), 566–773 (SHTC…ITDE), and 852–883 (SFES…SSRR). Basic and acidic residues predominate over residues 566–576 (SHTCHNGKADP). Positions 607–630 (PSISRSPASPASSGSFNHSPHSSG) are enriched in low complexity. Gly residues predominate over residues 631 to 640 (GASGIGGMSR). Residue serine 649 is modified to Phosphoserine. Positions 649 to 661 (SGGSVDSVLSQIA) are enriched in polar residues. 2 stretches are compositionally biased toward low complexity: residues 687 to 711 (SSSP…PSSS) and 720 to 737 (PPSG…TLTP). Residues serine 732 and serine 740 each carry the phosphoserine modification. The segment covering 748–768 (SSVSSSSSHRQSKSSGGSSSG) has biased composition (low complexity). One can recognise an SAM domain in the interval 771–834 (TDEDELTGIL…LAAISELNAG (64 aa)). Over residues 852–862 (SFESSASNTRA) the composition is skewed to polar residues. Basic and acidic residues predominate over residues 874–883 (RPEETVSSRR).

In terms of assembly, homooligomer. Interacts with NEK8. Central component of a complex containing at least ANKS6, INVS, NEK8 and NPHP3. ANKS6 may organize complex assembly by linking INVS and NPHP3 to NEK8 and INVS may target the complex to the proximal ciliary axoneme. Interacts (via SAM domain) with BICC1 (via KH domains) in an RNA-dependent manner. Interacts (via SAM domain) with ANKS3 (via SAM domain). In terms of processing, hydroxylated at Asn-129, most probably by HIF1AN. This hydroxylation results in decreased NEK8-binding. As to expression, expressed in kidney (at protein level).

It is found in the cell projection. It localises to the cilium. The protein resides in the cytoplasm. Its function is as follows. Required for renal function. The chain is Ankyrin repeat and SAM domain-containing protein 6 (Anks6) from Mus musculus (Mouse).